A 199-amino-acid polypeptide reads, in one-letter code: DNA repair RAD52-like protein 2, chloroplastic (199 aa).

The transit peptide at methionine 1–cysteine 40 directs the protein to the chloroplast. Position 41 is an N-acetylserine (serine 41).

Belongs to the RAD52 family. Expressed in roots and shoots. Expressed at low levels in cauline leaves, flower buds, flowers and siliques.

The protein localises to the plastid. Its subcellular location is the chloroplast. Functionally, involved in double-stranded DNA break repair. The protein is DNA repair RAD52-like protein 2, chloroplastic of Arabidopsis thaliana (Mouse-ear cress).